Here is a 308-residue protein sequence, read N- to C-terminus: Uricase-2 isozyme 1 (308 aa).

Residues lysine 17 and threonine 63 each act as charge relay system in the active site. Residues threonine 63, aspartate 64, phenylalanine 165, arginine 182, valine 237, glutamine 238, and asparagine 264 each contribute to the urate site. Histidine 266 serves as the catalytic Charge relay system. A Microbody targeting signal motif is present at residues 306–308; sequence SKL.

The protein belongs to the uricase family.

It is found in the peroxisome. The catalysed reaction is urate + O2 + H2O = 5-hydroxyisourate + H2O2. It functions in the pathway purine metabolism; urate degradation; (S)-allantoin from urate: step 1/3. Functionally, catalyzes the oxidation of uric acid to 5-hydroxyisourate, which is further processed to form (S)-allantoin. The polypeptide is Uricase-2 isozyme 1 (Canavalia lineata (Beach bean)).